A 410-amino-acid chain; its full sequence is LL-diaminopimelate aminotransferase (410 aa).

Y15 and G42 together coordinate substrate. Pyridoxal 5'-phosphate-binding positions include Y72, S108 to K109, Y132, N187, Y218, and S246 to S248. Residues K109, Y132, and N187 each contribute to the substrate site. The residue at position 249 (K249) is an N6-(pyridoxal phosphate)lysine. 2 residues coordinate pyridoxal 5'-phosphate: R257 and N292. The substrate site is built by N292 and R388.

This sequence belongs to the class-I pyridoxal-phosphate-dependent aminotransferase family. LL-diaminopimelate aminotransferase subfamily. In terms of assembly, homodimer. Requires pyridoxal 5'-phosphate as cofactor.

The enzyme catalyses (2S,6S)-2,6-diaminopimelate + 2-oxoglutarate = (S)-2,3,4,5-tetrahydrodipicolinate + L-glutamate + H2O + H(+). The protein operates within amino-acid biosynthesis; L-lysine biosynthesis via DAP pathway; LL-2,6-diaminopimelate from (S)-tetrahydrodipicolinate (aminotransferase route): step 1/1. Functionally, involved in the synthesis of meso-diaminopimelate (m-DAP or DL-DAP), required for both lysine and peptidoglycan biosynthesis. Catalyzes the direct conversion of tetrahydrodipicolinate to LL-diaminopimelate. This chain is LL-diaminopimelate aminotransferase, found in Geotalea uraniireducens (strain Rf4) (Geobacter uraniireducens).